The chain runs to 729 residues: Phosphoribosylformylglycinamidine synthase subunit PurL (729 aa).

Residue His54 is part of the active site. Tyr57 and Lys96 together coordinate ATP. Glu98 contacts Mg(2+). Residues 99–102 and Arg121 each bind substrate; that span reads SHNH. His100 functions as the Proton acceptor in the catalytic mechanism. Asp122 lines the Mg(2+) pocket. Substrate is bound at residue Gln245. A Mg(2+)-binding site is contributed by Asp273. 317 to 319 lines the substrate pocket; that stretch reads ETQ. 2 residues coordinate ATP: Asp495 and Gly532. A Mg(2+)-binding site is contributed by Asn533. Substrate is bound at residue Ser535.

Belongs to the FGAMS family. In terms of assembly, monomer. Part of the FGAM synthase complex composed of 1 PurL, 1 PurQ and 2 PurS subunits.

Its subcellular location is the cytoplasm. It catalyses the reaction N(2)-formyl-N(1)-(5-phospho-beta-D-ribosyl)glycinamide + L-glutamine + ATP + H2O = 2-formamido-N(1)-(5-O-phospho-beta-D-ribosyl)acetamidine + L-glutamate + ADP + phosphate + H(+). It participates in purine metabolism; IMP biosynthesis via de novo pathway; 5-amino-1-(5-phospho-D-ribosyl)imidazole from N(2)-formyl-N(1)-(5-phospho-D-ribosyl)glycinamide: step 1/2. In terms of biological role, part of the phosphoribosylformylglycinamidine synthase complex involved in the purines biosynthetic pathway. Catalyzes the ATP-dependent conversion of formylglycinamide ribonucleotide (FGAR) and glutamine to yield formylglycinamidine ribonucleotide (FGAM) and glutamate. The FGAM synthase complex is composed of three subunits. PurQ produces an ammonia molecule by converting glutamine to glutamate. PurL transfers the ammonia molecule to FGAR to form FGAM in an ATP-dependent manner. PurS interacts with PurQ and PurL and is thought to assist in the transfer of the ammonia molecule from PurQ to PurL. The protein is Phosphoribosylformylglycinamidine synthase subunit PurL of Staphylococcus aureus (strain bovine RF122 / ET3-1).